Here is a 2263-residue protein sequence, read N- to C-terminus: Collagen alpha-6(VI) chain (2263 aa).

Positions 1–19 are cleaved as a signal peptide; that stretch reads MMLLILFLVIICSHISVNQ. The tract at residues 20–1391 is nonhelical region; that stretch reads DSGPEYADVV…TCCCLFCKCI (1372 aa). VWFA domains lie at 27–206, 229–411, 436–606, 622–791, and 809–982; these read DVVF…IKDV, DVVF…RNQI, DIYL…RNQV, DIMF…EDDL, and DVVF…FSDV. Asn198, Asn275, Asn288, Asn347, and Asn520 each carry an N-linked (GlcNAc...) asparagine glycan. 2 N-linked (GlcNAc...) asparagine glycosylation sites follow: Asn930 and Asn988. 2 consecutive VWFA domains span residues 1000-1171 and 1187-1371; these read DLVF…NKRI and DVVV…GSRL. The N-linked (GlcNAc...) asparagine glycan is linked to Asn1290. The segment at 1392-1725 is triple-helical region; it reads GGDGTMGDPG…GRKGVKGAKG (334 aa). Residues 1397–1723 are disordered; sequence MGDPGPPGKR…PPGRKGVKGA (327 aa). Residues 1498 to 1508 are compositionally biased toward basic and acidic residues; the sequence is TPGDRGAKGLR. The short motif at 1508–1510 is the Cell attachment site element; that stretch reads RGD. Basic residues predominate over residues 1547–1559; sequence SRRKTAAHGRRGH. Over residues 1680 to 1689 the composition is skewed to gly residues; that stretch reads GDPGGPGETG. The tract at residues 1726–2263 is nonhelical region; it reads LASFSTCELI…MIESAPKQHD (538 aa). 2 consecutive VWFA domains span residues 1757–1937 and 1965–2166; these read ELVF…ERLQ and DAAF…INSI.

It belongs to the type VI collagen family. Trimers composed of three different chains: alpha-1(VI), alpha-2(VI), and alpha-3(VI) or alpha-5(VI) or alpha-6(VI). Prolines at the third position of the tripeptide repeating unit (G-X-Y) are hydroxylated in some or all of the chains.

It is found in the secreted. The protein resides in the extracellular space. The protein localises to the extracellular matrix. Collagen VI acts as a cell-binding protein. The polypeptide is Collagen alpha-6(VI) chain (COL6A6) (Homo sapiens (Human)).